We begin with the raw amino-acid sequence, 306 residues long: Phosphoribosylaminoimidazole-succinocarboxamide synthase (306 aa).

N-acetylserine is present on serine 2.

This sequence belongs to the SAICAR synthetase family. In terms of assembly, monomer.

It catalyses the reaction 5-amino-1-(5-phospho-D-ribosyl)imidazole-4-carboxylate + L-aspartate + ATP = (2S)-2-[5-amino-1-(5-phospho-beta-D-ribosyl)imidazole-4-carboxamido]succinate + ADP + phosphate + 2 H(+). Its pathway is purine metabolism; IMP biosynthesis via de novo pathway; 5-amino-1-(5-phospho-D-ribosyl)imidazole-4-carboxamide from 5-amino-1-(5-phospho-D-ribosyl)imidazole-4-carboxylate: step 1/2. Its function is as follows. Catalyzes the reaction of 4-carboxy-5-aminoimidazole ribotide (CAIR) and aspartic acid with the formation of N-succinyl-5-amino-imidazole-4-carboxamide ribotide (SAICAR) in the purine biosynthesis pathway. This Saccharomyces cerevisiae (strain ATCC 204508 / S288c) (Baker's yeast) protein is Phosphoribosylaminoimidazole-succinocarboxamide synthase (ADE1).